Reading from the N-terminus, the 590-residue chain is Putative DEAD-box ATP-dependent RNA helicase 51 (590 aa).

The interval 1-81 (MHPIKLCARS…KQGEGKKGSG (81 aa)) is disordered. The segment covering 40–51 (AACNSEGENNAT) has biased composition (polar residues). Basic and acidic residues predominate over residues 59–78 (NKKMKEEKSKRKKKQGEGKK). A Q motif motif is present at residues 86–114 (KLFSDLPISDLTANAIRDMNYTHLTEIQA). Residues 117–293 (IPPLMLGSDV…KLTFGSKEER (177 aa)) enclose the Helicase ATP-binding domain. 130–137 (AKTGSGKT) contacts ATP. Positions 240 to 243 (DEAD) match the DEAD box motif. The 153-residue stretch at 329-481 (VLYAFLKKAL…ELVPKLQPYL (153 aa)) folds into the Helicase C-terminal domain. Residues 549–590 (LESSASKHRKKRNVNTGRRHGIGPSNPYGRKGSDDRRQFARF) form a disordered region. The segment covering 554–569 (SKHRKKRNVNTGRRHG) has biased composition (basic residues). The segment covering 579–590 (KGSDDRRQFARF) has biased composition (basic and acidic residues).

It belongs to the DEAD box helicase family. DDX18/HAS1 subfamily.

It carries out the reaction ATP + H2O = ADP + phosphate + H(+). This is Putative DEAD-box ATP-dependent RNA helicase 51 from Oryza sativa subsp. japonica (Rice).